The sequence spans 174 residues: UPF0316 protein LMHCC_0787 (174 aa).

The next 3 helical transmembrane spans lie at 4–24, 36–56, and 62–82; these read GIFI…IYTV, LAAL…SLVL, and IANV…GMKI.

The protein belongs to the UPF0316 family.

It localises to the cell membrane. The chain is UPF0316 protein LMHCC_0787 from Listeria monocytogenes serotype 4a (strain HCC23).